Reading from the N-terminus, the 64-residue chain is Large ribosomal subunit protein bL35 (64 aa).

A compositionally biased stretch (basic residues) spans 1–14; that stretch reads MKQKTHKGTAKRIK. The segment at 1-48 is disordered; sequence MKQKTHKGTAKRIKVTGSGKLRREQANRRHLLEGKPSKRTRRLKGTED. A compositionally biased stretch (basic and acidic residues) spans 21–36; sequence LRREQANRRHLLEGKP.

It belongs to the bacterial ribosomal protein bL35 family.

The protein is Large ribosomal subunit protein bL35 of Corynebacterium aurimucosum (strain ATCC 700975 / DSM 44827 / CIP 107346 / CN-1) (Corynebacterium nigricans).